Consider the following 117-residue polypeptide: Minor capsid protein p17 (117 aa).

A glycan (N-linked (GlcNAc...) asparagine; by host) is linked at Asn-12. The chain crosses the membrane as a helical span at residues 39 to 59 (AIILGILILLVIILIIVAIVY). 2 N-linked (GlcNAc...) asparagine; by host glycosylation sites follow: Asn-61 and Asn-97.

The protein belongs to the asfivirus minor capsid protein p17 family. Interacts with the minor capsid protein M1249L and with the hexon capsid protein p72 capsomers; these interactions form a rigid zipper structure that stabilizes the capsomers. Interacts with host STING1.

The protein resides in the virion membrane. It is found in the host endoplasmic reticulum membrane. Its function is as follows. Together with the penton and the other minor capsid proteins (M1249L, p49), forms a complicated network immediately below the outer capsid shell, stabilizing the whole capsid. Three copies of p17 encircle each p72 capsomer in the inner capsid shell, anchoring p72 capsomers on the inner membrane. Required for the assembly of the capsid and icosahedral morphogenesis. Additionally, inhibits the host cGAS-STING pathway through its interaction with STING1 and subsequent interference of the recruitment of downstream components TBK1 and IKBKE. This Ornithodoros (relapsing fever ticks) protein is Minor capsid protein p17.